A 346-amino-acid chain; its full sequence is NADH-ubiquinone oxidoreductase chain 2 (346 aa).

10 consecutive transmembrane segments (helical) span residues 25 to 45, 52 to 72, 95 to 115, 124 to 144, 149 to 169, 178 to 196, 200 to 219, 247 to 267, 274 to 294, and 326 to 346; these read HWIL…PLIS, AIEA…LILF, CLIL…HFWF, LITA…LLLM, LNPA…GWMG, ILAF…IIIY, LTIL…FLSL, TLLS…WLII, EMTP…FFYL, and AILT…TTLV.

This sequence belongs to the complex I subunit 2 family.

Its subcellular location is the mitochondrion inner membrane. The enzyme catalyses a ubiquinone + NADH + 5 H(+)(in) = a ubiquinol + NAD(+) + 4 H(+)(out). Functionally, core subunit of the mitochondrial membrane respiratory chain NADH dehydrogenase (Complex I) that is believed to belong to the minimal assembly required for catalysis. Complex I functions in the transfer of electrons from NADH to the respiratory chain. The immediate electron acceptor for the enzyme is believed to be ubiquinone. The protein is NADH-ubiquinone oxidoreductase chain 2 (MT-ND2) of Coturnix japonica (Japanese quail).